Here is a 5098-residue protein sequence, read N- to C-terminus: Malformin synthetase mlfA (5098 aa).

The adenylation 1 stretch occupies residues 225 to 616; the sequence is ERHAANRPHS…CGRADTQVKL (392 aa). One can recognise a Carrier 1 domain in the interval 756–829; that stretch reads SRLEQEIQLA…EAASLAKVQE (74 aa). Position 790 is an O-(pantetheine 4'-phosphoryl)serine (Ser790). The interval 867 to 1298 is condensation 1; that stretch reads EDVFPCTTMQ…ALDSLTLLQA (432 aa). Positions 1326-1715 are adenylation 2; that stretch reads DGWVTRQPES…GRKDTQVKLR (390 aa). The Carrier 2 domain maps to 1853–1930; sequence TAASELERTL…QLAAEFGEPA (78 aa). O-(pantetheine 4'-phosphoryl)serine is present on Ser1890. 2 disordered regions span residues 1930–1960 and 1993–2022; these read AGQS…DGVD and GSSS…RVVS. Low complexity-rich tracts occupy residues 1933–1957 and 1993–2011; these read SASS…STND and GSSS…SSSS. The condensation 2 stretch occupies residues 2063-2478; the sequence is EDIYPATALQ…ALSHSDRQTL (416 aa). An adenylation 3 region spans residues 2501-2893; it reads VRTPHAPAVC…IGRRDGQLKL (393 aa). Positions 3029–3105 constitute a Carrier 3 domain; the sequence is RPVTAQEREM…QLMRHLSATR (77 aa). Ser3066 carries the O-(pantetheine 4'-phosphoryl)serine modification. 2 condensation regions span residues 3122–3587 and 3608–4027; these read WVAL…TYDQ and NIYP…EQLM. The interval 4052 to 4442 is adenylation 4; that stretch reads HASREAVCAW…VGRKDNQIKF (391 aa). A Carrier 4 domain is found at 4576-4652; the sequence is MPSTAAERKM…DLAYRTTNLV (77 aa). Ser4613 is modified (O-(pantetheine 4'-phosphoryl)serine). Residues 4689–5016 are condensation 5; sequence DVLPTTSFQR…LQTIVQHQNN (328 aa).

Belongs to the NRP synthetase family.

It participates in secondary metabolite biosynthesis. Functionally, nonribosomal peptide synthetase; part of the gene cluster that mediates the biosynthesis of malformins, cyclic pentapeptides with a disulfide bond between 2 consecutive cysteins, that show potential anti-tumor as well as antimalarial and antitrypanosomal properties. The nonribosomal peptide synthetase mlfA is responsible of the formation of the cyclic pentapeptide. The malformin biosynthesis clusters in malformin-producing fungi also contain enzymes involved in the formation of the disulfide bond between the two consecutive cysteins within malformins, in addition to additional tailoring enzymes such as methyltransferases or oxidoreductases. They are also composed of up to 4 major facilitator superfamily transporters, and transcription factors probably involved in the regulation of the expression of those clusters. This is Malformin synthetase mlfA from Aspergillus homomorphus (strain CBS 101889).